A 636-amino-acid chain; its full sequence is uncharacterized protein (636 aa).

Disordered regions lie at residues 1–22 (MYNV…NEIG) and 81–107 (SSQT…PQNN). At 1–170 (MYNVRGDLNR…YFVGGEGLMQ (170 aa)) the chain is on the cytoplasmic side. The helical; Signal-anchor for type II membrane protein transmembrane segment at 171–191 (LLFLLFLAAGTGMLFIGLPIL) threads the bilayer. The Lumenal portion of the chain corresponds to 192–636 (TYTGHNSLAS…RPKNSLMDGC (445 aa)). Positions 218–587 (LRYGSLIDPD…YVRIYQDSSD (370 aa)) constitute a GH16 domain. 6 N-linked (GlcNAc...) asparagine glycosylation sites follow: asparagine 291, asparagine 378, asparagine 429, asparagine 464, asparagine 489, and asparagine 616.

Belongs to the SKN1/KRE6 family.

The protein localises to the endoplasmic reticulum membrane. In terms of biological role, required for synthesis of the major beta-glucans of the yeast cell wall. This is an uncharacterized protein from Schizosaccharomyces pombe (strain 972 / ATCC 24843) (Fission yeast).